The primary structure comprises 102 residues: MAGQKIRIRLKSYDHAGLDTSARKIVDTVTRAGATVVGPVPLPTEKNVVCVIRSPHKYKDSREHFEMRTHKRLIDIVDPTPKAVDSLMRLDLPADVNIEIKL.

This sequence belongs to the universal ribosomal protein uS10 family. Part of the 30S ribosomal subunit.

Involved in the binding of tRNA to the ribosomes. This chain is Small ribosomal subunit protein uS10, found in Leifsonia xyli subsp. xyli (strain CTCB07).